A 400-amino-acid chain; its full sequence is Elongation factor Tu (400 aa).

Positions 10–210 (KPHVNVGTIG…ALDSYIPEPV (201 aa)) constitute a tr-type G domain. The segment at 19-26 (GHVDHGKT) is G1. 19–26 (GHVDHGKT) is a GTP binding site. Residue Thr26 participates in Mg(2+) binding. The G2 stretch occupies residues 66–70 (ILTIA). The G3 stretch occupies residues 87-90 (DCPG). GTP contacts are provided by residues 87-91 (DCPGH) and 142-145 (NKCD). The interval 142 to 145 (NKCD) is G4. The tract at residues 180–182 (SAI) is G5.

Belongs to the TRAFAC class translation factor GTPase superfamily. Classic translation factor GTPase family. EF-Tu/EF-1A subfamily. As to quaternary structure, monomer.

It localises to the cytoplasm. The catalysed reaction is GTP + H2O = GDP + phosphate + H(+). Functionally, GTP hydrolase that promotes the GTP-dependent binding of aminoacyl-tRNA to the A-site of ribosomes during protein biosynthesis. This chain is Elongation factor Tu, found in Gemmatimonas aurantiaca (strain DSM 14586 / JCM 11422 / NBRC 100505 / T-27).